Reading from the N-terminus, the 145-residue chain is MIKYFDKNNEVFNLIKDLTGRLNVEILEINIFRNKNNGKIQIVLYSKNFSLDIDFLTDLHKMILLILEANLKYGFTLELSTPGIDRKIKSDREFKIFEGKKIKLMLDNEFEEGFILESKPKSFIFKTDSKEVNVFYSDVKKARLV.

This sequence belongs to the RimP family.

The protein resides in the cytoplasm. In terms of biological role, required for maturation of 30S ribosomal subunits. This chain is Ribosome maturation factor RimP, found in Borreliella burgdorferi (strain ATCC 35210 / DSM 4680 / CIP 102532 / B31) (Borrelia burgdorferi).